The following is a 558-amino-acid chain: Formate--tetrahydrofolate ligase (558 aa).

Residue 66–73 participates in ATP binding; that stretch reads TPAGEGKT.

Belongs to the formate--tetrahydrofolate ligase family.

The enzyme catalyses (6S)-5,6,7,8-tetrahydrofolate + formate + ATP = (6R)-10-formyltetrahydrofolate + ADP + phosphate. It functions in the pathway one-carbon metabolism; tetrahydrofolate interconversion. The sequence is that of Formate--tetrahydrofolate ligase from Neisseria gonorrhoeae (strain ATCC 700825 / FA 1090).